We begin with the raw amino-acid sequence, 288 residues long: Protein shisa-2 (288 aa).

A signal peptide spans 1-23 (MWLEGSPLAVLAAVSFLLSVLAA). Over 24-110 (AQGSGEYCHG…DSTAVPIYVP (87 aa)) the chain is Extracellular. Residues 111 to 131 (FLIVGSVFVAFIIVGSLVAIC) form a helical membrane-spanning segment. Residues 132–288 (CCRCLRPKQE…EQMMYPAVTV (157 aa)) are Cytoplasmic-facing. The segment covering 161 to 188 (SSASTSRGSSSRQSSTAASSSSSANSGA) has biased composition (low complexity). Residues 161 to 198 (SSASTSRGSSSRQSSTAASSSSSANSGARPPPTRSQTN) are disordered.

It belongs to the shisa family. In terms of assembly, interacts with fzd8 and fgfr1.

The protein localises to the endoplasmic reticulum membrane. In terms of biological role, plays an essential role in the maturation of presomitic mesoderm cells by individual attenuation of both fgf and wnt signaling. Inhibits both wnt and fgf signaling through the regulation of protein maturation and cell surface transportation of their receptors within the endoplasmic reticulum. The protein is Protein shisa-2 (shisa2) of Xenopus laevis (African clawed frog).